The sequence spans 635 residues: Threonine--tRNA ligase (635 aa).

Residues 1–58 form the TGS domain; it reads MIHVTCNQEAFELPEGASAMDLANKMKQSHCFVGALINDQEKDLSTTLQDGDTVLFLT. A catalytic region spans residues 237 to 528; it reads DHRVLGTKLD…LIEHFKGRFP (292 aa). Residues cysteine 328, histidine 379, and histidine 505 each contribute to the Zn(2+) site.

It belongs to the class-II aminoacyl-tRNA synthetase family. Homodimer. Zn(2+) is required as a cofactor.

It is found in the cytoplasm. It catalyses the reaction tRNA(Thr) + L-threonine + ATP = L-threonyl-tRNA(Thr) + AMP + diphosphate + H(+). Its function is as follows. Catalyzes the attachment of threonine to tRNA(Thr) in a two-step reaction: L-threonine is first activated by ATP to form Thr-AMP and then transferred to the acceptor end of tRNA(Thr). Also edits incorrectly charged L-seryl-tRNA(Thr). This is Threonine--tRNA ligase from Chlamydia trachomatis serovar L2b (strain UCH-1/proctitis).